We begin with the raw amino-acid sequence, 77 residues long: Omega-conotoxin TxVII (77 aa).

Positions 1–22 are cleaved as a signal peptide; that stretch reads MKLTCMMIVAVLFLTAWTFATA. The propeptide occupies 23 to 49; it reads DDSGNGLENLFPKAHHEMKNPEASKLN. Intrachain disulfides connect Cys52-Cys67, Cys59-Cys71, and Cys66-Cys75.

Expressed by the venom duct.

It localises to the secreted. In terms of biological role, omega-conotoxins act at presynaptic membranes, they bind and block voltage-gated calcium channels (Cav). Specifically acts on L-type channels. It blocks molluscan dihydropyridine-sensitive calcium channels. This chain is Omega-conotoxin TxVII, found in Conus textile (Cloth-of-gold cone).